An 868-amino-acid chain; its full sequence is Translation initiation factor IF-2 (868 aa).

Disordered regions lie at residues 158–178 (VKEE…DELT) and 200–269 (KKEE…KYRE). Over residues 200-209 (KKEEVKPEKV) the composition is skewed to basic and acidic residues. The span at 249-260 (RGGRSKFKKKKG) shows a compositional bias: basic residues. In terms of domain architecture, tr-type G spans 368 to 537 (GRAPVVTIMG…LLQSEVLELK (170 aa)). The interval 377–384 (GHVDHGKT) is G1. 377–384 (GHVDHGKT) contacts GTP. A G2 region spans residues 402–406 (GITQH). The interval 423 to 426 (DTPG) is G3. GTP-binding positions include 423-427 (DTPGH) and 477-480 (NKMD). A G4 region spans residues 477-480 (NKMD). The interval 513–515 (SAK) is G5.

Belongs to the TRAFAC class translation factor GTPase superfamily. Classic translation factor GTPase family. IF-2 subfamily.

The protein resides in the cytoplasm. Functionally, one of the essential components for the initiation of protein synthesis. Protects formylmethionyl-tRNA from spontaneous hydrolysis and promotes its binding to the 30S ribosomal subunits. Also involved in the hydrolysis of GTP during the formation of the 70S ribosomal complex. This is Translation initiation factor IF-2 from Legionella pneumophila (strain Lens).